The sequence spans 414 residues: xyloglucan O-acetyltransferase 2 (414 aa).

The Cytoplasmic portion of the chain corresponds to 1 to 26 (MKSSSSIFRETSEKKSERWMMMNIGR). Residues 27-47 (FSPFFLSSFCITLFFTGFFVY) form a helical; Signal-anchor for type II membrane protein membrane-spanning segment. Over 48-414 (QNPFKSIADQ…FLMAIIRQLR (367 aa)) the chain is Lumenal. Intrachain disulfides connect Cys70/Cys120, Cys91/Cys156, Cys100/Cys394, and Cys317/Cys390. Asn88 carries an N-linked (GlcNAc...) asparagine glycan. A GDS motif motif is present at residues 143-145 (GDS). Ser145 acts as the Nucleophile in catalysis. N-linked (GlcNAc...) asparagine glycosylation is found at Asn205, Asn263, and Asn308. Asp389 serves as the catalytic Proton donor. Positions 389 to 392 (DCVH) match the DXXH motif motif. The Proton acceptor role is filled by His392.

Belongs to the PC-esterase family. TBL subfamily.

The protein localises to the membrane. In terms of biological role, xyloglucan acetyltransferase that catalyzes the acetylation of fucosylated Gal residues on xyloglucan side chains. Predominantly catalyze 6-O-monoacetylation of Gal residues in the Fuc-Gal-Xyl trisaccharide side chains of xyloglucan oligomers. Involved in xyloglucan specific O-acetylation in seeds. This is xyloglucan O-acetyltransferase 2 from Arabidopsis thaliana (Mouse-ear cress).